The primary structure comprises 170 residues: Adenine phosphoribosyltransferase (170 aa).

The protein belongs to the purine/pyrimidine phosphoribosyltransferase family. In terms of assembly, homodimer.

Its subcellular location is the cytoplasm. It catalyses the reaction AMP + diphosphate = 5-phospho-alpha-D-ribose 1-diphosphate + adenine. It participates in purine metabolism; AMP biosynthesis via salvage pathway; AMP from adenine: step 1/1. Functionally, catalyzes a salvage reaction resulting in the formation of AMP, that is energically less costly than de novo synthesis. This is Adenine phosphoribosyltransferase from Mycoplasmopsis agalactiae (strain NCTC 10123 / CIP 59.7 / PG2) (Mycoplasma agalactiae).